The primary structure comprises 235 residues: Small ribosomal subunit protein eS4 (235 aa).

Residues 43-114 (IPLLLIVRDM…DPHRFLRLIE (72 aa)) form the S4 RNA-binding domain.

It belongs to the eukaryotic ribosomal protein eS4 family.

This is Small ribosomal subunit protein eS4 from Korarchaeum cryptofilum (strain OPF8).